Consider the following 188-residue polypeptide: Large ribosomal subunit protein bL35m (188 aa).

This sequence belongs to the bacterial ribosomal protein bL35 family.

The protein localises to the mitochondrion. The sequence is that of Large ribosomal subunit protein bL35m (Mrpl35) from Mus musculus (Mouse).